The primary structure comprises 174 residues: Protein C2-DOMAIN ABA-RELATED 6 (174 aa).

A C2 domain is found at 1-115 (MEKTEEEVEM…HKLGLKELPH (115 aa)). Ca(2+) contacts are provided by arginine 30, aspartate 31, aspartate 36, aspartate 82, lysine 83, aspartate 84, and aspartate 90.

It belongs to the plant CAR protein family. Binds to PYR/PYL/RCAR abscisic acid intracellular receptors in an ABA-independent manner, both at the plasma membrane and in the nucleus. Subunit of a complex made of CAR6, PHOT1 and RPT3/NPH3. Interacts directly with RPT3/NPH3.

Its subcellular location is the cell membrane. It localises to the nucleus. In terms of biological role, stimulates the GTPase/ATPase activities of Obg-like ATPases. Mediates the transient calcium-dependent interaction of PYR/PYL/RCAR abscisic acid (ABA) receptors with the plasma membrane and thus regulates ABA sensitivity. Prevents hypocotyl bending as well as gravitropic response under blue light conditions. The polypeptide is Protein C2-DOMAIN ABA-RELATED 6 (Arabidopsis thaliana (Mouse-ear cress)).